We begin with the raw amino-acid sequence, 345 residues long: S-adenosylmethionine:tRNA ribosyltransferase-isomerase (345 aa).

The protein belongs to the QueA family. Monomer.

The protein localises to the cytoplasm. The enzyme catalyses 7-aminomethyl-7-carbaguanosine(34) in tRNA + S-adenosyl-L-methionine = epoxyqueuosine(34) in tRNA + adenine + L-methionine + 2 H(+). It functions in the pathway tRNA modification; tRNA-queuosine biosynthesis. In terms of biological role, transfers and isomerizes the ribose moiety from AdoMet to the 7-aminomethyl group of 7-deazaguanine (preQ1-tRNA) to give epoxyqueuosine (oQ-tRNA). The protein is S-adenosylmethionine:tRNA ribosyltransferase-isomerase of Anaeromyxobacter dehalogenans (strain 2CP-C).